The following is a 172-amino-acid chain: Ubiquitin-conjugating enzyme E2 2 (172 aa).

The region spanning 4–150 is the UBC core domain; that stretch reads PARRRLMRDF…VKETVEKSWE (147 aa). Cys88 (glycyl thioester intermediate) is an active-site residue. The residue at position 120 (Ser120) is a Phosphoserine; by SGV1. Residues 145–172 are disordered; the sequence is VEKSWEDDMDDMDDDDDDDDDDDDDEAD. The segment covering 151 to 172 has biased composition (acidic residues); that stretch reads DDMDDMDDDDDDDDDDDDDEAD.

The protein belongs to the ubiquitin-conjugating enzyme family. Forms a heterodimer complexes with the E3 enzymes BRE1, RAD18 and UBR1. Also interacts with UBR2, RTF1, PAF1 and the RNA polymerase II hyperphosphorylated form. The interaction with RNA polymerase II is BRE1- and PAF1-dependent. Post-translationally, the N-terminus is blocked.

The protein localises to the cytoplasm. It localises to the nucleus. It catalyses the reaction S-ubiquitinyl-[E1 ubiquitin-activating enzyme]-L-cysteine + [E2 ubiquitin-conjugating enzyme]-L-cysteine = [E1 ubiquitin-activating enzyme]-L-cysteine + S-ubiquitinyl-[E2 ubiquitin-conjugating enzyme]-L-cysteine.. It functions in the pathway protein modification; protein ubiquitination. Its function is as follows. E2 ubiquitin-conjugating enzyme that accepts ubiquitin from the ubiquitin-activating enzyme E1 and transfers it to a E3 ubiquitin-protein ligase. In association with the E3 enzyme BRE1 and LGE1, it plays a role in transcription regulation by catalyzing the monoubiquitination of histone H2B to form H2BK123ub1. H2BK123ub1 gives a specific tag for epigenetic transcriptional activation, elongation by RNA polymerase II, telomeric silencing, and is also a prerequisite for H3K4me and H3K79me formation. In association with the E3 enzyme RAD18, it catalyzes the monoubiquitination of POL30 'Lys-164', involved in postreplication repair of UV-damaged DNA. The RAD6/UBC2-RAD18 complex is also involved in prevention of spontaneous mutations caused by 7,8-dihydro-8-oxoguanine. In association with the E3 enzyme UBR1, is involved in N-end rule-dependent protein degradation. Also involved in sporulation. The sequence is that of Ubiquitin-conjugating enzyme E2 2 (RAD6) from Saccharomyces cerevisiae (strain ATCC 204508 / S288c) (Baker's yeast).